Reading from the N-terminus, the 196-residue chain is MAGNAAVGVLALQGDVSEHISAFESAIQNLGLNIPVVPVRKAEQILDLMALAIPGGESTTIMRLIEKNGMRNIIQNFKGGIFATCAGMVVSARDLINETRFTPLDLLDITVNRNAFGRQRESFEADLQISGFDTPFHAIFIRAPVITRAGPDVTILAEIPQGIVAAKKGKKLILSFHPEISHDLRMHEYFLKDMLG.

56 to 58 (GES) lines the L-glutamine pocket. Cysteine 85 functions as the Nucleophile in the catalytic mechanism. Residues arginine 113 and 141 to 142 (IR) contribute to the L-glutamine site. Catalysis depends on charge relay system residues histidine 177 and glutamate 179.

Belongs to the glutaminase PdxT/SNO family. In terms of assembly, in the presence of PdxS, forms a dodecamer of heterodimers. Only shows activity in the heterodimer.

It catalyses the reaction aldehydo-D-ribose 5-phosphate + D-glyceraldehyde 3-phosphate + L-glutamine = pyridoxal 5'-phosphate + L-glutamate + phosphate + 3 H2O + H(+). The enzyme catalyses L-glutamine + H2O = L-glutamate + NH4(+). The protein operates within cofactor biosynthesis; pyridoxal 5'-phosphate biosynthesis. Functionally, catalyzes the hydrolysis of glutamine to glutamate and ammonia as part of the biosynthesis of pyridoxal 5'-phosphate. The resulting ammonia molecule is channeled to the active site of PdxS. The protein is Pyridoxal 5'-phosphate synthase subunit PdxT of Methanospirillum hungatei JF-1 (strain ATCC 27890 / DSM 864 / NBRC 100397 / JF-1).